We begin with the raw amino-acid sequence, 179 residues long: MSRIGKSPVQIPDKVSVDINGLTITVKGPKGELKRLMPEGVDFVQKENQIVVTPSTTKRYSRERHGLCRTLISNMVQGVTDGYSKKLEIVGVGSRAQVKGKTLVVSAGYSHPVEMTPPDGITYKVESNTNVTVSGIDKEIVGNEAAKIRSIRPPEPYKGKGIKYQDERIIRKAGKSGKK.

Belongs to the universal ribosomal protein uL6 family. Part of the 50S ribosomal subunit.

This protein binds to the 23S rRNA, and is important in its secondary structure. It is located near the subunit interface in the base of the L7/L12 stalk, and near the tRNA binding site of the peptidyltransferase center. The chain is Large ribosomal subunit protein uL6 from Prochlorococcus marinus (strain MIT 9515).